We begin with the raw amino-acid sequence, 517 residues long: Succinyl-CoA:3-ketoacid coenzyme A transferase 2, mitochondrial (517 aa).

A mitochondrion-targeting transit peptide spans Met-1 to Arg-39. Glu-341 functions as the 5-glutamyl coenzyme A thioester intermediate in the catalytic mechanism.

Belongs to the 3-oxoacid CoA-transferase family. Homodimer. In terms of tissue distribution, testis specific.

It localises to the mitochondrion. It catalyses the reaction a 3-oxo acid + succinyl-CoA = a 3-oxoacyl-CoA + succinate. Its pathway is ketone metabolism; succinyl-CoA degradation; acetoacetyl-CoA from succinyl-CoA: step 1/1. Key enzyme for ketone body catabolism. Transfers the CoA moiety from succinate to acetoacetate. Formation of the enzyme-CoA intermediate proceeds via an unstable anhydride species formed between the carboxylate groups of the enzyme and substrate. The protein is Succinyl-CoA:3-ketoacid coenzyme A transferase 2, mitochondrial (OXCT2) of Homo sapiens (Human).